Here is a 218-residue protein sequence, read N- to C-terminus: Adenylate kinase (218 aa).

Residue glycine 10–threonine 15 participates in ATP binding. Residues serine 30–valine 59 are NMP. Residues threonine 31, arginine 36, glycine 57–valine 59, glycine 85–arginine 88, and glutamine 92 contribute to the AMP site. Residues glycine 122–aspartate 159 form an LID region. ATP-binding positions include arginine 123 and valine 132–tyrosine 133. The AMP site is built by arginine 156 and arginine 167. ATP is bound at residue glycine 203.

Belongs to the adenylate kinase family. As to quaternary structure, monomer.

Its subcellular location is the cytoplasm. The enzyme catalyses AMP + ATP = 2 ADP. The protein operates within purine metabolism; AMP biosynthesis via salvage pathway; AMP from ADP: step 1/1. Functionally, catalyzes the reversible transfer of the terminal phosphate group between ATP and AMP. Plays an important role in cellular energy homeostasis and in adenine nucleotide metabolism. This is Adenylate kinase from Chromohalobacter salexigens (strain ATCC BAA-138 / DSM 3043 / CIP 106854 / NCIMB 13768 / 1H11).